A 183-amino-acid chain; its full sequence is Cell division protein ZapC (183 aa).

Belongs to the ZapC family. As to quaternary structure, interacts directly with FtsZ.

Its subcellular location is the cytoplasm. Contributes to the efficiency of the cell division process by stabilizing the polymeric form of the cell division protein FtsZ. Acts by promoting interactions between FtsZ protofilaments and suppressing the GTPase activity of FtsZ. This chain is Cell division protein ZapC, found in Proteus mirabilis (strain HI4320).